A 398-amino-acid chain; its full sequence is Phospholipase C (398 aa).

The signal sequence occupies residues 1–28; the sequence is MKRKIYKLLICATIATSLWAVRTTKVYA. Zn(2+)-binding residues include Trp29, His39, Asp84, His96, His154, Asp158, His164, His176, and Glu180. A Zn-dependent PLC domain is found at 29–278; that stretch reads WDGKADGTGT…HDVSDGKDSS (250 aa). Residues 275–283 are linker; sequence KDSSANKNV. The PLAT domain maps to 284 to 398; the sequence is NELVAYITTG…ISGNSTYNIK (115 aa). 9 residues coordinate Ca(2+): Gly299, Thr300, Asp301, Asp321, Asn322, Gly324, Asn325, Asp326, and Asp365.

The cofactor is Ca(2+). It depends on Zn(2+) as a cofactor.

It localises to the secreted. The catalysed reaction is a 1,2-diacyl-sn-glycero-3-phosphocholine + H2O = phosphocholine + a 1,2-diacyl-sn-glycerol + H(+). Its function is as follows. Bacterial hemolysins are exotoxins that attack blood cell membranes and cause cell rupture. Constitutes an essential virulence factor in gas gangrene. Binds to eukaryotic membranes where it hydrolyzes both phosphatidylcholine and sphingomyelin, causing cell rupture. The diacylglycerol produced can activate both the arachidonic acid pathway, leading to modulation of the inflammatory response cascade and thrombosis, and protein kinase C, leading to activation of eukaryotic phospholipases and further membrane damage. The protein is Phospholipase C (plc) of Clostridium perfringens.